Here is a 354-residue protein sequence, read N- to C-terminus: Uroporphyrinogen decarboxylase (354 aa).

Residues 27 to 31 (RQAGR), aspartate 77, tyrosine 154, serine 209, and histidine 327 each bind substrate.

It belongs to the uroporphyrinogen decarboxylase family. As to quaternary structure, homodimer.

It is found in the cytoplasm. It catalyses the reaction uroporphyrinogen III + 4 H(+) = coproporphyrinogen III + 4 CO2. It participates in porphyrin-containing compound metabolism; protoporphyrin-IX biosynthesis; coproporphyrinogen-III from 5-aminolevulinate: step 4/4. Catalyzes the decarboxylation of four acetate groups of uroporphyrinogen-III to yield coproporphyrinogen-III. The sequence is that of Uroporphyrinogen decarboxylase from Methylobacillus flagellatus (strain ATCC 51484 / DSM 6875 / VKM B-1610 / KT).